We begin with the raw amino-acid sequence, 251 residues long: Triosephosphate isomerase (251 aa).

Substrate is bound by residues Asn-10 and Lys-12. Catalysis depends on His-96, which acts as the Electrophile. Glu-168 acts as the Proton acceptor in catalysis.

This sequence belongs to the triosephosphate isomerase family. As to quaternary structure, homodimer.

The catalysed reaction is D-glyceraldehyde 3-phosphate = dihydroxyacetone phosphate. The protein operates within carbohydrate biosynthesis; gluconeogenesis. Its pathway is carbohydrate degradation; glycolysis; D-glyceraldehyde 3-phosphate from glycerone phosphate: step 1/1. This Aspergillus oryzae (strain ATCC 42149 / RIB 40) (Yellow koji mold) protein is Triosephosphate isomerase (tpiA).